The chain runs to 369 residues: Phosphate-binding protein PstS 3 (369 aa).

The first 21 residues, Met-1–Gly-21, serve as a signal peptide directing secretion. A lipid anchor (N-palmitoyl cysteine) is attached at Cys-22. Cys-22 carries the S-diacylglycerol cysteine lipid modification. Phosphate-binding positions include Ser-55–Ala-57, Ser-85, Asp-103, and Ser-190–Thr-192.

The protein belongs to the PstS family. In terms of assembly, the complex is composed of two ATP-binding proteins (PstB), two transmembrane proteins (PstC and PstA) and a solute-binding protein (PstS).

The protein resides in the cell membrane. In terms of biological role, part of the ABC transporter complex PstSACB involved in phosphate import. This is Phosphate-binding protein PstS 3 (pstS2) from Mycobacterium leprae (strain TN).